We begin with the raw amino-acid sequence, 331 residues long: Glyceraldehyde-3-phosphate dehydrogenase (331 aa).

NAD(+)-binding positions include 11–12 (RI), Asp33, and Arg78. D-glyceraldehyde 3-phosphate-binding positions include 148–150 (SCT), Thr179, 208–209 (TG), and Arg231. The active-site Nucleophile is Cys149. Residue Asn313 coordinates NAD(+).

This sequence belongs to the glyceraldehyde-3-phosphate dehydrogenase family. Homotetramer.

Its subcellular location is the cytoplasm. The catalysed reaction is D-glyceraldehyde 3-phosphate + phosphate + NAD(+) = (2R)-3-phospho-glyceroyl phosphate + NADH + H(+). Its pathway is carbohydrate degradation; glycolysis; pyruvate from D-glyceraldehyde 3-phosphate: step 1/5. This chain is Glyceraldehyde-3-phosphate dehydrogenase (GPD), found in Eremothecium gossypii (strain ATCC 10895 / CBS 109.51 / FGSC 9923 / NRRL Y-1056) (Yeast).